We begin with the raw amino-acid sequence, 825 residues long: Zygotic DNA replication licensing factor mcm6-B (825 aa).

The C4-type zinc finger occupies 159-186 (CLDCQTLVRDVEQQFKYTQPSICRNPVC). One can recognise an MCM domain in the interval 347 to 554 (LYHNLCTSLF…TDYAIARRIV (208 aa)). Position 397-404 (397-404 (GDPSTAKS)) interacts with ATP. The Arginine finger signature appears at 529-532 (SRFD). Over residues 668-679 (DQEDEHEVEEPQ) the composition is skewed to acidic residues. The disordered stretch occupies residues 668–690 (DQEDEHEVEEPQEGINGDADVPN).

The protein belongs to the MCM family. Component of the mcm2-7 complex (RLF-M). The complex forms a toroidal hexameric ring with the proposed subunit order mcm2-mcm6-mcm4-mcm7-mcm3-mcm5 (By simililarity). Begins to associate with zmcm3, mcm4 and mcm7 into mcm complexes at the neurula stage.

The protein resides in the nucleus. The catalysed reaction is ATP + H2O = ADP + phosphate + H(+). Acts as a component of the mcm2-7 complex (mcm complex) which is the putative replicative helicase essential for 'once per cell cycle' DNA replication initiation and elongation in eukaryotic cells. The active ATPase sites in the mcm2-7 ring are formed through the interaction surfaces of two neighboring subunits such that a critical structure of a conserved arginine finger motif is provided in trans relative to the ATP-binding site of the Walker A box of the adjacent subunit. The six ATPase active sites, however, are likely to contribute differentially to the complex helicase activity. The existence of maternal and zygotic forms of mcm3 and mcm6 suggests that specific forms of mcm2-7 complexes may be used during different stages of development. May replace mmcm6 in the mcm2-7 complex. This Xenopus laevis (African clawed frog) protein is Zygotic DNA replication licensing factor mcm6-B (zmcm6-b).